The following is a 473-amino-acid chain: Lysophospholipid acyltransferase 5 (473 aa).

The next 4 helical transmembrane spans lie at 20-40 (LLISVLAGYPLAVVHRTFFYN), 43-63 (AQHQHLFFVIVGLSLWMFNCG), 66-86 (VIHPILSIFGAFFITNFMAGT), and 88-108 (ASIYAAHIVFLGHLLIGYWFH). Residues asparagine 315 and histidine 351 contribute to the active site. 3 helical membrane-spanning segments follow: residues 341–361 (VITLSYLAIWHGYHLGYFLLF), 396–416 (FIWIFGKLTISYSMGFAFLMF), and 431–451 (LYFIGFIIYFIVWPILHMVLL). The Di-lysine motif signature appears at 470 to 473 (KKEL).

It belongs to the membrane-bound acyltransferase family.

The protein resides in the endoplasmic reticulum membrane. It catalyses the reaction a 1-acyl-sn-glycero-3-phosphocholine + an acyl-CoA = a 1,2-diacyl-sn-glycero-3-phosphocholine + CoA. The catalysed reaction is a 1-acyl-sn-glycero-3-phospho-L-serine + an acyl-CoA = a 1,2-diacyl-sn-glycero-3-phospho-L-serine + CoA. The enzyme catalyses a 1-acyl-sn-glycero-3-phosphoethanolamine + an acyl-CoA = a 1,2-diacyl-sn-glycero-3-phosphoethanolamine + CoA. It participates in lipid metabolism; phospholipid metabolism. Functionally, probable acyltransferase which may mediate the conversion of lysophosphatidylcholine (1-acyl-sn-glycero-3-phosphocholine or LPC) into phosphatidylcholine (1,2-diacyl-sn-glycero-3-phosphocholine or PC) (LPCAT activity). May also catalyze the conversion of lysophosphatidylethanolamine (1-acyl-2-hydroxy-sn-glycero-3-phosphoethanolamine or LPE) into phosphatidylethanolamine (1,2-diacyl-sn-glycero-3-phosphoethanolamine or PE) (LPEAT activity), as well as the conversion of lysophosphatidylserine (1-acyl-2-hydroxy-sn-glycero-3-phospho-L-serine or LPS) into phosphatidylserine (1,2-diacyl-sn-glycero-3-phospho-L-serine or PS) (LPSAT activity). Required for incorporation of arachidonic acid into PC, PE, and PS. The polypeptide is Lysophospholipid acyltransferase 5 (mboa-6) (Caenorhabditis elegans).